Here is a 350-residue protein sequence, read N- to C-terminus: Ubiquitin carboxyl-terminal hydrolase 11 (350 aa).

Positions 49 to 344 (KGLYNVSGND…SACLLFYEME (296 aa)) constitute a USP domain. Cys-59 acts as the Nucleophile in catalysis. Catalysis depends on His-302, which acts as the Proton acceptor.

The protein belongs to the peptidase C19 family.

It catalyses the reaction Thiol-dependent hydrolysis of ester, thioester, amide, peptide and isopeptide bonds formed by the C-terminal Gly of ubiquitin (a 76-residue protein attached to proteins as an intracellular targeting signal).. The protein is Ubiquitin carboxyl-terminal hydrolase 11 (ubp11) of Schizosaccharomyces pombe (strain 972 / ATCC 24843) (Fission yeast).